A 320-amino-acid polypeptide reads, in one-letter code: tRNA N6-adenosine threonylcarbamoyltransferase (320 aa).

Positions 114 and 118 each coordinate Fe cation. Residues 136-140, aspartate 169, glycine 182, aspartate 186, and asparagine 273 contribute to the substrate site; that span reads VVSGG. Aspartate 297 lines the Fe cation pocket.

This sequence belongs to the KAE1 / TsaD family. The cofactor is Fe(2+).

It is found in the cytoplasm. The enzyme catalyses L-threonylcarbamoyladenylate + adenosine(37) in tRNA = N(6)-L-threonylcarbamoyladenosine(37) in tRNA + AMP + H(+). Required for the formation of a threonylcarbamoyl group on adenosine at position 37 (t(6)A37) in tRNAs that read codons beginning with adenine. Is involved in the transfer of the threonylcarbamoyl moiety of threonylcarbamoyl-AMP (TC-AMP) to the N6 group of A37, together with TsaE and TsaB. TsaD likely plays a direct catalytic role in this reaction. The polypeptide is tRNA N6-adenosine threonylcarbamoyltransferase (Ureaplasma parvum serovar 3 (strain ATCC 27815 / 27 / NCTC 11736)).